The sequence spans 403 residues: Heparan-sulfate 6-O-sulfotransferase 2 (403 aa).

Residues 1 to 7 (MEDRSHK) lie on the Cytoplasmic side of the membrane. The helical; Signal-anchor for type II membrane protein transmembrane segment at 8–28 (VLLALVMLFLFAVIVLQYVCP) threads the bilayer. Residues 29-403 (GTECQLLRLR…DYLGNVERWR (375 aa)) lie on the Lumenal side of the membrane. Residue Asn64 is glycosylated (N-linked (GlcNAc...) asparagine). A 3'-phosphoadenylyl sulfate-binding site is contributed by 88–96 (HIQKTGGTT). Residues 118 to 119 (KK), Arg135, Trp140, and His145 each bind substrate. His145 (proton acceptor) is an active-site residue. 3'-phosphoadenylyl sulfate contacts are provided by Arg180 and Ser188. Residues His192 and Trp199 each contribute to the substrate site. Asn259 carries N-linked (GlcNAc...) asparagine glycosylation. 3'-phosphoadenylyl sulfate is bound at residue 312–314 (TQY). Residue Asn315 is glycosylated (N-linked (GlcNAc...) asparagine). 318-319 (RA) serves as a coordination point for 3'-phosphoadenylyl sulfate. The disordered stretch occupies residues 381 to 403 (AHLREQGENSSSTDYLGNVERWR). Residue Asn389 is glycosylated (N-linked (GlcNAc...) asparagine).

It belongs to the sulfotransferase 6 family.

The protein resides in the membrane. It catalyses the reaction alpha-D-glucosaminyl-[heparan sulfate](n) + 3'-phosphoadenylyl sulfate = 6-sulfo-alpha-D-glucosaminyl-[heparan sulfate](n) + adenosine 3',5'-bisphosphate + H(+). Its function is as follows. 6-O-sulfation enzyme which catalyzes the transfer of sulfate from 3'-phosphoadenosine 5'-phosphosulfate (PAPS) to position 6 of the N-sulfoglucosamine residue (GlcNS) of heparan sulfate. May also play a role in limb development. The protein is Heparan-sulfate 6-O-sulfotransferase 2 (HS6ST2) of Gallus gallus (Chicken).